The following is a 449-amino-acid chain: Trigger factor (449 aa).

Positions 174-261 constitute a PPIase FKBP-type domain; sequence GDIAVVGFKG…LKDLKTRELP (88 aa). The disordered stretch occupies residues 430–449; the sequence is ENSTVTEKAPDKDKPSVTDA. A compositionally biased stretch (basic and acidic residues) spans 437-449; the sequence is KAPDKDKPSVTDA.

Belongs to the FKBP-type PPIase family. Tig subfamily.

It is found in the cytoplasm. The enzyme catalyses [protein]-peptidylproline (omega=180) = [protein]-peptidylproline (omega=0). In terms of biological role, involved in protein export. Acts as a chaperone by maintaining the newly synthesized protein in an open conformation. Functions as a peptidyl-prolyl cis-trans isomerase. The protein is Trigger factor of Synechococcus sp. (strain CC9311).